Consider the following 92-residue polypeptide: UPF0250 protein COSY_0496 (92 aa).

This sequence belongs to the UPF0250 family.

This chain is UPF0250 protein COSY_0496, found in Vesicomyosocius okutanii subsp. Calyptogena okutanii (strain HA).